Consider the following 536-residue polypeptide: Mitogen-activated protein kinase kinase kinase mom-4 (536 aa).

Low complexity predominate over residues 1-20 (MDNSSQSKPSSSSSSHSPSP). The segment at 1 to 34 (MDNSSQSKPSSSSSSHSPSPAAITPTQRTTRDSG) is disordered. The Protein kinase domain maps to 51-305 (NLNSHYLGKG…SSECVEYFTL (255 aa)). ATP contacts are provided by residues 57–65 (LGKGTYGLV) and lysine 84. Aspartate 176 acts as the Proton acceptor in catalysis. The tract at residues 314–438 (SVPLSDSSTN…EHRRDSNDEE (125 aa)) is disordered. 2 stretches are compositionally biased toward polar residues: residues 315-325 (VPLSDSSTNGP) and 350-366 (NNRTPTASKLLNPQQPG). Residues 405–438 (KNFRDRAKSEQRQPHRDARPPPPFEHRRDSNDEE) are compositionally biased toward basic and acidic residues.

It belongs to the protein kinase superfamily. STE Ser/Thr protein kinase family. MAP kinase kinase kinase subfamily. In terms of assembly, interacts with, and is activated by, tap-1. It depends on Mg(2+) as a cofactor. Post-translationally, may be autophosphorylated.

The catalysed reaction is L-seryl-[protein] + ATP = O-phospho-L-seryl-[protein] + ADP + H(+). It catalyses the reaction L-threonyl-[protein] + ATP = O-phospho-L-threonyl-[protein] + ADP + H(+). Functionally, part of the Wnt signaling pathway essential for the specification of the mesodermal cell fate in early embryos. Stimulates the wrm-1/lit-1-dependent phosphorylation of pop-1 and plays a role in the initial nuclear accumulation of wrm-1. The polypeptide is Mitogen-activated protein kinase kinase kinase mom-4 (Caenorhabditis elegans).